The primary structure comprises 420 residues: Tyrosine--tRNA ligase (420 aa).

Tyr38 contacts L-tyrosine. The short motif at 43-52 (PTGDSLHIGH) is the 'HIGH' region element. The L-tyrosine site is built by Tyr169 and Gln173. A 'KMSKS' region motif is present at residues 231–235 (KFGKS). Lys234 is an ATP binding site. The 67-residue stretch at 353 to 419 (KNLVDFLVDT…GKRKYTLVTI (67 aa)) folds into the S4 RNA-binding domain.

The protein belongs to the class-I aminoacyl-tRNA synthetase family. TyrS type 1 subfamily. As to quaternary structure, homodimer.

The protein resides in the cytoplasm. It carries out the reaction tRNA(Tyr) + L-tyrosine + ATP = L-tyrosyl-tRNA(Tyr) + AMP + diphosphate + H(+). Catalyzes the attachment of tyrosine to tRNA(Tyr) in a two-step reaction: tyrosine is first activated by ATP to form Tyr-AMP and then transferred to the acceptor end of tRNA(Tyr). This chain is Tyrosine--tRNA ligase, found in Lactobacillus helveticus (strain DPC 4571).